A 374-amino-acid chain; its full sequence is Anhydro-N-acetylmuramic acid kinase (374 aa).

12–19 (GTSLDGVD) is an ATP binding site.

This sequence belongs to the anhydro-N-acetylmuramic acid kinase family.

The enzyme catalyses 1,6-anhydro-N-acetyl-beta-muramate + ATP + H2O = N-acetyl-D-muramate 6-phosphate + ADP + H(+). It participates in amino-sugar metabolism; 1,6-anhydro-N-acetylmuramate degradation. Its pathway is cell wall biogenesis; peptidoglycan recycling. Catalyzes the specific phosphorylation of 1,6-anhydro-N-acetylmuramic acid (anhMurNAc) with the simultaneous cleavage of the 1,6-anhydro ring, generating MurNAc-6-P. Is required for the utilization of anhMurNAc either imported from the medium or derived from its own cell wall murein, and thus plays a role in cell wall recycling. The polypeptide is Anhydro-N-acetylmuramic acid kinase (Enterobacter sp. (strain 638)).